We begin with the raw amino-acid sequence, 169 residues long: Protein AIG2 B (169 aa).

A substrate-binding site is contributed by 15-20 (YGSFQE). Residue Glu-83 is the Proton acceptor of the active site.

It belongs to the gamma-glutamylcyclotransferase family. Expressed in roots, leaves and stems.

Its function is as follows. Putative gamma-glutamylcyclotransferase. The sequence is that of Protein AIG2 B from Arabidopsis thaliana (Mouse-ear cress).